Consider the following 216-residue polypeptide: Cytochrome c oxidase assembly protein CtaG (216 aa).

Over residues 1-23 the composition is skewed to low complexity; sequence MTDAPQHPQQPATGTPATPKAAP. Residues 1–24 form a disordered region; sequence MTDAPQHPQQPATGTPATPKAAPR. Residues 1–26 are Cytoplasmic-facing; that stretch reads MTDAPQHPQQPATGTPATPKAAPRVG. The chain crosses the membrane as a helical; Signal-anchor for type II membrane protein span at residues 27–49; that stretch reads RDVRIGATCGLLVALMVGAAYAA. Residues 50–216 lie on the Periplasmic side of the membrane; it reads VPFYNWFCRA…SEPDRPGGSI (167 aa).

It belongs to the COX11/CtaG family.

It localises to the cell inner membrane. Functionally, exerts its effect at some terminal stage of cytochrome c oxidase synthesis, probably by being involved in the insertion of the copper B into subunit I. This is Cytochrome c oxidase assembly protein CtaG from Nitrobacter hamburgensis (strain DSM 10229 / NCIMB 13809 / X14).